A 495-amino-acid polypeptide reads, in one-letter code: Adenosylhomocysteinase (495 aa).

Substrate-binding residues include Thr71, Asp156, and Glu218. Position 219 to 221 (219 to 221) interacts with NAD(+); sequence TTT. Lys248 and Asp252 together coordinate substrate. NAD(+) is bound by residues Asn253, 282–287, Glu305, Asn340, 361–363, and Asn409; these read GYGDVG and IGH.

The protein belongs to the adenosylhomocysteinase family. NAD(+) is required as a cofactor.

The protein resides in the cytoplasm. The enzyme catalyses S-adenosyl-L-homocysteine + H2O = L-homocysteine + adenosine. It functions in the pathway amino-acid biosynthesis; L-homocysteine biosynthesis; L-homocysteine from S-adenosyl-L-homocysteine: step 1/1. In terms of biological role, may play a key role in the regulation of the intracellular concentration of adenosylhomocysteine. This Mycobacterium tuberculosis (strain ATCC 25177 / H37Ra) protein is Adenosylhomocysteinase.